We begin with the raw amino-acid sequence, 264 residues long: Gap junction beta-1 protein (264 aa).

Topologically, residues 1–22 (MNWAGLYAILSGVNRHSTSIGR) are cytoplasmic. A helical membrane pass occupies residues 23 to 45 (IWLSVVFIFRIMVLVAAAESVWG). Topologically, residues 46–75 (DEKSAFTCNTQQPGCNSVCYDHFFPISHIR) are extracellular. The chain crosses the membrane as a helical span at residues 76-98 (LWALQLIIVSTPALLVAMHVAHL). Over 99–130 (QHQEKKELRLSRHVKDQELAEVKKHKVKISGT) the chain is Cytoplasmic. The helical transmembrane segment at 131-153 (LWWTYISSVFFRIIFEAAFMYIF) threads the bilayer. Over 154–191 (YLIYPGYSMIRLLKCDAYPCPNTVDCFVSRPTEKTIFT) the chain is Extracellular. A helical membrane pass occupies residues 192 to 214 (VFMLVASGVCIVLNVAEVFFLIA). At 215–264 (QACTRRARRHRDSGSISKEHQQNEMNLLITGGSIIKRSAGQEKGDHCSTS) the chain is on the cytoplasmic side.

This sequence belongs to the connexin family. Beta-type (group I) subfamily. As to quaternary structure, a connexon is composed of a hexamer of connexins. Lung, liver, intestines, stomach and kidney.

It localises to the cell membrane. It is found in the cell junction. The protein resides in the gap junction. In terms of biological role, one gap junction consists of a cluster of closely packed pairs of transmembrane channels, the connexons, through which materials of low MW diffuse from one cell to a neighboring cell. The polypeptide is Gap junction beta-1 protein (gjb1) (Xenopus laevis (African clawed frog)).